Here is a 2089-residue protein sequence, read N- to C-terminus: Mediator of DNA damage checkpoint protein 1 (2089 aa).

Residues 1 to 19 (MEDTQAIDWDVEEEEETEQ) are compositionally biased toward acidic residues. The disordered stretch occupies residues 1–22 (MEDTQAIDWDVEEEEETEQSSE). The segment at 1–150 (MEDTQAIDWD…SRGPLTVEET (150 aa)) is interaction with CHEK2. The interval 2-220 (EDTQAIDWDV…PFAFNLNSDT (219 aa)) is interaction with the MRN complex. A Phosphothreonine; by ATM modification is found at Thr4. The region spanning 54-105 (NVVGRMPDCSVALPFPSISKQHAEIEILAWDKAPILRDCGSLNGTQILRPPK) is the FHA domain. Position 108 is a phosphoserine (Ser108). The tract at residues 145–568 (LTVEETPRVQ…PAKLLVVSLE (424 aa)) is required for nuclear localization (NLS1). Phosphothreonine is present on Thr146. The residue at position 168 (Ser168) is a Phosphoserine; by CK2. Ser176 carries the post-translational modification Phosphoserine. 3 disordered regions span residues 185-248 (RTTS…AKQS), 261-280 (DQPL…GAGN), and 286-317 (GVIL…AEVH). Ser196 and Ser218 each carry phosphoserine; by CK2. At Thr220 the chain carries Phosphothreonine; by CK2. Basic and acidic residues predominate over residues 261 to 274 (DQPLVKERDNDTKV). Ser299 carries the post-translational modification Phosphoserine; by CK2. At Thr301 the chain carries Phosphothreonine; by CK2. The segment covering 306–317 (DSRPPGRPAEVH) has biased composition (basic and acidic residues). Ser329 is subject to Phosphoserine; by CK2. The residue at position 331 (Thr331) is a Phosphothreonine; by CK2. Residue Ser372 is modified to Phosphoserine. Position 376 is a phosphoserine; by CK2 (Ser376). Position 378 is a phosphothreonine; by CK2 (Thr378). Residues Ser394 and Ser397 each carry the phosphoserine modification. Residue Ser402 is modified to Phosphoserine; by CK2. Position 404 is a phosphothreonine; by CK2 (Thr404). At Ser411 the chain carries Phosphoserine. Thr449 is modified (phosphothreonine). Phosphoserine; by CK2 is present on Ser453. The residue at position 455 (Thr455) is a Phosphothreonine; by CK2. Residues 482-515 (RAHSEKDQPPFGDSDDSVEADKSSPGIHLERSQA) form a disordered region. Ser485, Ser495, Ser498, Ser504, Ser505, and Ser513 each carry phosphoserine. A Phosphothreonine modification is found at Thr523. Ser590 carries the post-translational modification Phosphoserine. Lys616 is covalently cross-linked (Glycyl lysine isopeptide (Lys-Gly) (interchain with G-Cter in SUMO1); alternate). Residue Lys616 forms a Glycyl lysine isopeptide (Lys-Gly) (interchain with G-Cter in SUMO2); alternate linkage. Disordered stretches follow at residues 653-689 (DTLG…DNYG) and 780-1887 (SPPR…TKLN). The span at 671–685 (GREREQHVGGTKDSE) shows a compositional bias: basic and acidic residues. Ser780 and Ser793 each carry phosphoserine. Lys812 bears the N6-acetyllysine mark. Composition is skewed to basic and acidic residues over residues 819–844 (ETAE…ERQT), 851–862 (ELTKGKQDREQK), 868–905 (DTQR…EKQV), and 914–951 (AFER…RGEP). A phosphoserine mark is found at Ser955 and Ser998. The span at 955–965 (SQDQKGQASSP) shows a compositional bias: polar residues. Over residues 1016 to 1031 (KASRIRAAEKVSRGDQ) the composition is skewed to basic and acidic residues. Ser1033 carries the post-translational modification Phosphoserine. Residues 1040–1051 (PTVPEAPAPPQK) show a composition bias toward pro residues. A phosphoserine mark is found at Ser1068 and Ser1086. Residues 1103-1113 (PKPKIRTRKSS) show a composition bias toward basic residues. Residues 1129–1156 (PSTSTAQPVTPKPTSQATRSRTNRSSVK) are compositionally biased toward polar residues. Positions 1148–1610 (SRTNRSSVKT…TNRSSVKTPE (463 aa)) are interaction with the PRKDC complex. Thr1157 is subject to Phosphothreonine. A compositionally biased stretch (polar residues) spans 1169–1187 (QPSTSTDQPVTSEPTSQVT). The residue at position 1198 (Thr1198) is a Phosphothreonine. Residues 1210 to 1228 (QPSTSTDRPVTSEPTSQAT) show a composition bias toward polar residues. At Ser1235 the chain carries Phosphoserine. Position 1239 is a phosphothreonine (Thr1239). Positions 1251–1268 (QPSTSTDQPVTSEPTYQA) are enriched in polar residues. Thr1280 and Thr1302 each carry phosphothreonine. 2 stretches are compositionally biased toward low complexity: residues 1304 to 1318 (KPTS…NMSS) and 1347 to 1359 (TSRT…NMSS). The span at 1375–1391 (PSTSTEQPVTPEPTSRA) shows a compositional bias: polar residues. 2 positions are modified to phosphoserine: Ser1399 and Ser1400. Lys1402 carries the post-translational modification N6-acetyllysine. Position 1403 is a phosphothreonine (Thr1403). A Glycyl lysine isopeptide (Lys-Gly) (interchain with G-Cter in SUMO1); alternate cross-link involves residue Lys1413. Lys1413 is covalently cross-linked (Glycyl lysine isopeptide (Lys-Gly) (interchain with G-Cter in SUMO2); alternate). Composition is skewed to polar residues over residues 1416–1444 (PSTS…SVKT), 1456–1475 (QPST…QATR), 1498–1514 (ASAS…TSRT), and 1538–1555 (QPST…TSRA). Residues Thr1425 and Thr1466 each carry the phosphothreonine modification. The residue at position 1548 (Thr1548) is a Phosphothreonine. Residue Ser1564 is modified to Phosphoserine. Phosphothreonine is present on residues Thr1567 and Thr1589. Over residues 1579–1596 (QPSTSRNQLVTPEPTSRA) the composition is skewed to polar residues. Ser1604 carries the post-translational modification Phosphoserine. Thr1608 bears the Phosphothreonine mark. Pro residues predominate over residues 1611-1620 (PVVPTAPEPH). Polar residues predominate over residues 1624 to 1636 (STDQPVTPKLTSR). Thr1630, Thr1664, and Thr1671 each carry phosphothreonine. Residues 1678 to 1689 (GGQSKTLRSSTV) show a composition bias toward polar residues. Residue Ser1681 is modified to Phosphoserine. A Phosphothreonine modification is found at Thr1697. Positions 1698–1719 (PEFQSPVTTDQPISPEPITQPS) are enriched in polar residues. Residues 1698-2089 (PEFQSPVTTD…VLSPLEMSST (392 aa)) form a required for nuclear localization (NLS2) region. Ser1702 and Ser1711 each carry phosphoserine. Lys1740 is covalently cross-linked (Glycyl lysine isopeptide (Lys-Gly) (interchain with G-Cter in SUMO2)). Position 1775 is a phosphoserine (Ser1775). Lys1790 participates in a covalent cross-link: Glycyl lysine isopeptide (Lys-Gly) (interchain with G-Cter in SUMO2). Thr1800 is subject to Phosphothreonine. At Ser1820 the chain carries Phosphoserine. A compositionally biased stretch (polar residues) spans 1823–1836 (HQKQPQRGEVSQKT). A Glycyl lysine isopeptide (Lys-Gly) (interchain with G-Cter in SUMO1); alternate cross-link involves residue Lys1840. Lys1840 participates in a covalent cross-link: Glycyl lysine isopeptide (Lys-Gly) (interchain with G-Cter in SUMO2); alternate. Over residues 1847 to 1857 (AEKPGKEEDVV) the composition is skewed to basic and acidic residues. At Thr1858 the chain carries Phosphothreonine. 2 consecutive BRCT domains span residues 1892-1970 (APKV…EYVV) and 1991-2082 (RERR…FVLS). The residue at position 1943 (Arg1943) is an Omega-N-methylarginine.

In terms of assembly, homodimer. Interacts with H2AX, which requires phosphorylation of H2AX on 'Ser-139'. Interacts with the MRN complex, composed of MRE11, RAD50, and NBN. Interacts with CHEK2, which requires ATM-mediated phosphorylation of 'Thr-68' within the FHA domain of CHEK2. Interacts constitutively with the BRCA1-BARD1 complex, SMC1A and TP53BP1. Interacts with ATM and FANCD2, and these interactions are reduced upon DNA damage. Also interacts with the PRKDC complex, composed of XRCC6/KU70, XRCC5/KU80 and PRKDC/XRCC7. This interaction may be required for PRKDC autophosphorylation, which is essential for DNA double strand break (DSB) repair. When phosphorylated by ATM, interacts with RNF8 (via FHA domain). Interacts with CEP164. When phosphorylated, interacts with APTX (via FHA-like domain). Interacts (when phosphorylated) with TOPBP1; promoting TOPBP1 localization to DNA damage sites during mitosis. Interacts (when phosphorylated) with NBN; promoting NBN and MRN complex localization to DNA damage sites. In terms of processing, phosphorylated upon exposure to ionizing radiation (IR), ultraviolet radiation (UV), and hydroxyurea (HU). Phosphorylation in response to IR requires ATM, NBN, and possibly CHEK2. Also phosphorylated during the G2/M phase of the cell cycle and during activation of the mitotic spindle checkpoint. Phosphorylation at Thr-4 by ATM stabilizes and enhances homodimerization via the FHA domain. Phosphorylated at Ser-168 and Ser-196 by CK2 in response to DNA damage during mitosis, promoting interaction with TOPBP1. Phosphorylated by CK2 in response to DNA damage, promoting interaction with NBN and recruitment of the MRN complex to DNA damage sites. Post-translationally, sumoylation at Lys-1840 by PIAS4 following DNA damage promotes ubiquitin-mediated degradation. Ubiquitinated by RNF4, leading to proteasomal degradation; undergoes 'Lys-48'-linked polyubiquitination. In terms of tissue distribution, highly expressed in testis.

The protein localises to the nucleus. The protein resides in the chromosome. Functionally, histone reader protein required for checkpoint-mediated cell cycle arrest in response to DNA damage within both the S phase and G2/M phases of the cell cycle. Specifically recognizes and binds histone H2AX phosphorylated at 'Ser-139', a marker of DNA damage, serving as a scaffold for the recruitment of DNA repair and signal transduction proteins to discrete foci of DNA damage sites. Also required for downstream events subsequent to the recruitment of these proteins. These include phosphorylation and activation of the ATM, CHEK1 and CHEK2 kinases, and stabilization of TP53/p53 and apoptosis. ATM and CHEK2 may also be activated independently by a parallel pathway mediated by TP53BP1. Required for chromosomal stability during mitosis by promoting recruitment of TOPBP1 to DNA double strand breaks (DSBs): TOPBP1 forms filamentous assemblies that bridge MDC1 and tether broken chromosomes during mitosis. Required for the repair of DSBs via homologous recombination by promoting recruitment of NBN component of the MRN complex to DSBs. This Homo sapiens (Human) protein is Mediator of DNA damage checkpoint protein 1.